The primary structure comprises 309 residues: Porphobilinogen deaminase (309 aa).

Residue cysteine 244 is modified to S-(dipyrrolylmethanemethyl)cysteine.

It belongs to the HMBS family. Monomer. It depends on dipyrromethane as a cofactor.

The catalysed reaction is 4 porphobilinogen + H2O = hydroxymethylbilane + 4 NH4(+). It participates in porphyrin-containing compound metabolism; protoporphyrin-IX biosynthesis; coproporphyrinogen-III from 5-aminolevulinate: step 2/4. Functionally, tetrapolymerization of the monopyrrole PBG into the hydroxymethylbilane pre-uroporphyrinogen in several discrete steps. This is Porphobilinogen deaminase from Agrobacterium fabrum (strain C58 / ATCC 33970) (Agrobacterium tumefaciens (strain C58)).